The primary structure comprises 702 residues: Methionine--tRNA ligase (702 aa).

Residues 14-24 (PYANGPVHLGH) carry the 'HIGH' region motif. Zn(2+)-binding residues include Cys146, Cys149, Cys159, and Cys162. Positions 344-348 (KFSKS) match the 'KMSKS' region motif. Residue Lys347 coordinates ATP. Residues 601–702 (DFLKVDLRVA…GDEINGQQIQ (102 aa)) form the tRNA-binding domain.

This sequence belongs to the class-I aminoacyl-tRNA synthetase family. MetG type 1 subfamily. Homodimer. It depends on Zn(2+) as a cofactor.

It is found in the cytoplasm. It carries out the reaction tRNA(Met) + L-methionine + ATP = L-methionyl-tRNA(Met) + AMP + diphosphate. Is required not only for elongation of protein synthesis but also for the initiation of all mRNA translation through initiator tRNA(fMet) aminoacylation. In Chlorobium limicola (strain DSM 245 / NBRC 103803 / 6330), this protein is Methionine--tRNA ligase.